Here is a 268-residue protein sequence, read N- to C-terminus: Tryptophan synthase alpha chain (268 aa).

Active-site proton acceptor residues include glutamate 49 and aspartate 60.

This sequence belongs to the TrpA family. As to quaternary structure, tetramer of two alpha and two beta chains.

The enzyme catalyses (1S,2R)-1-C-(indol-3-yl)glycerol 3-phosphate + L-serine = D-glyceraldehyde 3-phosphate + L-tryptophan + H2O. Its pathway is amino-acid biosynthesis; L-tryptophan biosynthesis; L-tryptophan from chorismate: step 5/5. In terms of biological role, the alpha subunit is responsible for the aldol cleavage of indoleglycerol phosphate to indole and glyceraldehyde 3-phosphate. This chain is Tryptophan synthase alpha chain, found in Shigella dysenteriae serotype 1 (strain Sd197).